The sequence spans 232 residues: Large ribosomal subunit protein uL1 (232 aa).

This sequence belongs to the universal ribosomal protein uL1 family. As to quaternary structure, part of the 50S ribosomal subunit.

Binds directly to 23S rRNA. The L1 stalk is quite mobile in the ribosome, and is involved in E site tRNA release. In terms of biological role, protein L1 is also a translational repressor protein, it controls the translation of the L11 operon by binding to its mRNA. The polypeptide is Large ribosomal subunit protein uL1 (Colwellia psychrerythraea (strain 34H / ATCC BAA-681) (Vibrio psychroerythus)).